The chain runs to 397 residues: Proteinase-activated receptor 2 (397 aa).

The N-terminal stretch at 1 to 25 (MRSPSAAWLLGAAILLAASLSCSGT) is a signal peptide. Residues 26 to 36 (IQGTNRSSKGR) constitute a propeptide, removed for receptor activation. Asn-30 is a glycosylation site (N-linked (GlcNAc...) asparagine). The Extracellular segment spans residues 37–71 (SLIGKVDGTSHVTGKGVTVETVFSVDEFSASVLTG). A helical membrane pass occupies residues 72 to 101 (KLTTVFLPIVYTIVFVVGLPSNGMALWVFL). Topologically, residues 102–108 (FRTKKKH) are cytoplasmic. The chain crosses the membrane as a helical span at residues 109–137 (PAVIYMANLALADLLSVIWFPLKIAYHIH). At 138 to 149 (GNNWIYGEALCN) the chain is on the extracellular side. A disulfide bridge links Cys-148 with Cys-226. The chain crosses the membrane as a helical span at residues 150 to 177 (VLIGFFYGNMYCSILFMTCLSVQRYWVI). The Cytoplasmic portion of the chain corresponds to 178–183 (VNPMGH). Residues 184–211 (SRKKANIAIGISLAIWLLILLVTIPLYV) form a helical membrane-spanning segment. Residues 212 to 235 (VKQTIFIPALNITTCHDVLPEQLL) are Extracellular-facing. Residue Asn-222 is glycosylated (N-linked (GlcNAc...) asparagine). The helical transmembrane segment at 236–269 (VGDMFNYFLSLAIGVFLFPAFLTASAYVLMIRML) threads the bilayer. Over 270-277 (RSSAMDEN) the chain is Cytoplasmic. The chain crosses the membrane as a helical span at residues 278 to 317 (SEKKRKRAIKLIVTVLAMYLICFTPSNLLLVVHYFLIKSQ). The Extracellular portion of the chain corresponds to 318–323 (GQSHVY). The helical transmembrane segment at 324-347 (ALYIVALCLSTLNSCIDPFVYYFV) threads the bilayer. Residues 348 to 397 (SHDFRDHAKNALLCRSVRTVKQMQVSLTSKKHSRKSSSYSSSSTTVKTSY) are Cytoplasmic-facing. Cys-361 is lipidated: S-palmitoyl cysteine. Residues 373–397 (SLTSKKHSRKSSSYSSSSTTVKTSY) form a disordered region. Low complexity predominate over residues 383-397 (SSSYSSSSTTVKTSY).

This sequence belongs to the G-protein coupled receptor 1 family. In terms of assembly, interacts with TLR4, COPS5 and TMED2. Interacts with GNAQ, GNA11, GNA12, GNA13 and GNA14. In terms of processing, a proteolytic cleavage generates a new N-terminus that functions as a tethered ligand. Activating serine proteases include trypsin, mast cell tryptase, coagulation factors VII and Xa, myeloblastin/PRTN3 and membrane-type serine protease 1/ST14. Subsequent cleavage by serine proteases, including neutrophil elastase and cathepsin G, leads to receptor deactivation. At least in part, implicated proteases are also shown to activate the receptor; the glycosylation status of the receptor is thought to contribute to the difference. In addition to conventional trypsin-like proteases activated by other proteases and glycosidases derived from bacteria, fungi and insects. Activated by serine protease allergens such as dust mite Der p3 and Der p9 and mold Pen c13. Activated by P.gingivalis arginine-specific (trypsin-like) cysteine proteinases called gingipains. Activated by S.griseus exogenous chitinase. Activated by A.alternata aspartate protease; the cleavage generates non-conventional processed forms. Proteolytically cleaved by coagulation factor Xa (F10); cleavage results in activation of F2RL1-dependent signaling. N-glycosylated and sialylated. Post-translationally, multiple phosphorylated on serine and threonine residues in the cytoplasmic region upon receptor activation; required for receptor desensitization and recruitment of beta-arrestin. In terms of processing, monoubiquitinated by CBL at the plasma membrane and in early endosomes; not required for receptor endocytosis but for translocation to late endosomes or lysosomes. Deubiquitination involves STAMBP and USP8; required for lysosomal trafficking and receptor degradation. Widely expressed in tissues with especially high levels in pancreas, liver, kidney, small intestine, and colon. Moderate expression is detected in many organs, but none in brain or skeletal muscle. Expressed in endothelial cells.

It is found in the cell membrane. With respect to regulation, activated upon interaction by mucunain, a cowhage (Mucuna pruriens) plant cysteine proteinase. Receptor for trypsin and trypsin-like enzymes coupled to G proteins. Its function is mediated through the activation of several signaling pathways including phospholipase C (PLC), intracellular calcium, mitogen-activated protein kinase (MAPK), I-kappaB kinase/NF-kappaB and Rho. Can also be transactivated by cleaved F2R/PAR1. Involved in modulation of inflammatory responses and regulation of innate and adaptive immunity, and acts as a sensor for proteolytic enzymes generated during infection. Generally is promoting inflammation. Can signal synergistically with TLR4 and probably TLR2 in inflammatory responses and modulates TLR3 signaling. Has a protective role in establishing the endothelial barrier; the activity involves coagulation factor X. Regulates endothelial cell barrier integrity during neutrophil extravasation, probably following proteolytic cleavage by PRTN3. Proposed to have a bronchoprotective role in airway epithelium, but also shown to compromise the airway epithelial barrier by interrupting E-cadherin adhesion. Involved in the regulation of vascular tone; activation results in hypotension presumably mediated by vasodilation. Associates with a subset of G proteins alpha subunits such as GNAQ, GNA11, GNA14, GNA12 and GNA13, but probably not with G(o)-alpha, G(i) subunit alpha-1 and G(i) subunit alpha-2. However, according to PubMed:21627585 can signal through G(i) subunit alpha. Believed to be a class B receptor which internalizes as a complex with arrestin and traffic with it to endosomal vesicles, presumably as desensitized receptor, for extended periods of time. Mediates inhibition of TNF-alpha stimulated JNK phosphorylation via coupling to GNAQ and GNA11; the function involves dissociation of RIPK1 and TRADD from TNFR1. Mediates phosphorylation of nuclear factor NF-kappa-B RELA subunit at 'Ser-536'; the function involves IKBKB and is predominantly independent of G proteins. Involved in cellular migration. Involved in cytoskeletal rearrangement and chemotaxis through beta-arrestin-promoted scaffolds; the function is independent of GNAQ and GNA11 and involves promotion of cofilin dephosphorylation and actin filament severing. Induces redistribution of COPS5 from the plasma membrane to the cytosol and activation of the JNK cascade is mediated by COPS5. Involved in the recruitment of leukocytes to the sites of inflammation and is the major PAR receptor capable of modulating eosinophil function such as pro-inflammatory cytokine secretion, superoxide production and degranulation. During inflammation promotes dendritic cell maturation, trafficking to the lymph nodes and subsequent T-cell activation. Involved in antimicrobial response of innate immune cells; activation enhances phagocytosis of Gram-positive and killing of Gram-negative bacteria. Acts synergistically with interferon-gamma in enhancing antiviral responses. Implicated in a number of acute and chronic inflammatory diseases such as of the joints, lungs, brain, gastrointestinal tract, periodontium, skin, and vascular systems, and in autoimmune disorders. Probably mediates activation of pro-inflammatory and pro-fibrotic responses in fibroblasts, triggered by coagulation factor Xa (F10). Mediates activation of barrier protective signaling responses in endothelial cells, triggered by coagulation factor Xa (F10). This chain is Proteinase-activated receptor 2 (F2RL1), found in Homo sapiens (Human).